Reading from the N-terminus, the 212-residue chain is Thymidylate kinase (212 aa).

10-17 (GPDGAGKT) is an ATP binding site.

Belongs to the thymidylate kinase family.

It carries out the reaction dTMP + ATP = dTDP + ADP. Functionally, phosphorylation of dTMP to form dTDP in both de novo and salvage pathways of dTTP synthesis. The protein is Thymidylate kinase of Enterococcus faecalis (strain ATCC 700802 / V583).